Here is a 176-residue protein sequence, read N- to C-terminus: Protein GrpE (176 aa).

Residues 1–28 form a disordered region; that stretch reads MSEQKQEFENENAENSEHLQDENLQNIE.

The protein belongs to the GrpE family. As to quaternary structure, homodimer.

The protein localises to the cytoplasm. In terms of biological role, participates actively in the response to hyperosmotic and heat shock by preventing the aggregation of stress-denatured proteins, in association with DnaK and GrpE. It is the nucleotide exchange factor for DnaK and may function as a thermosensor. Unfolded proteins bind initially to DnaJ; upon interaction with the DnaJ-bound protein, DnaK hydrolyzes its bound ATP, resulting in the formation of a stable complex. GrpE releases ADP from DnaK; ATP binding to DnaK triggers the release of the substrate protein, thus completing the reaction cycle. Several rounds of ATP-dependent interactions between DnaJ, DnaK and GrpE are required for fully efficient folding. The polypeptide is Protein GrpE (Campylobacter jejuni subsp. jejuni serotype O:2 (strain ATCC 700819 / NCTC 11168)).